Reading from the N-terminus, the 263-residue chain is LIM and SH3 domain protein 1 (263 aa).

M1 is subject to N-acetylmethionine. In terms of domain architecture, LIM zinc-binding spans 3-63 (PNCARCGKIV…NAHYPKQSFT (61 aa)). K42 is modified (N6-acetyllysine). Nebulin repeat units lie at residues 64–95 (MVAD…KNKG) and 97–131 (GFSV…KSRM). T68 carries the phosphothreonine modification. K75 is subject to N6-methyllysine. S99 carries the post-translational modification Phosphoserine. T104 carries the post-translational modification Phosphothreonine. K112 carries the post-translational modification N6-succinyllysine. Phosphoserine occurs at positions 118 and 134. The interval 122-207 (YHEEFEKSRM…QRSAPGGGGK (86 aa)) is disordered. Residues 148-162 (DSSSYRRPTEQQQPQ) show a composition bias toward polar residues. Positions 204–263 (GGGKRYRAVYDYSAADEDEVSFQDGDTIVNVQQIDDGWMYGTVERTGDTGMLPANYVEAI) constitute an SH3 domain.

In terms of assembly, interacts with F-actin. Interacts with ANKRD54. Interacts with KBTBD10. Post-translationally, phosphorylated. As to expression, expressed in a wide range of tissues (but not the heart or skeletal muscle), the expression is specific for certain actin-rich cell types within these tissues. Expression is prominent in the cortical regions of ion-transporting duct cells in the pancreas, in the salivary parotid gland and in certain F-actin-rich cells in the distal tubule/collecting duct. In primary cultures of gastric fibroblasts, expression is mainly within the tips of lamellipodia and at the leading edges of membrane ruffles.

It localises to the cytoplasm. It is found in the cell cortex. Its subcellular location is the cytoskeleton. Its function is as follows. Plays an important role in the regulation of dynamic actin-based, cytoskeletal activities. Agonist-dependent changes in LASP1 phosphorylation may also serve to regulate actin-associated ion transport activities, not only in the parietal cell but also in certain other F-actin-rich secretory epithelial cell types. In Rattus norvegicus (Rat), this protein is LIM and SH3 domain protein 1.